The following is a 455-amino-acid chain: Probable carboxypeptidase MCYG_07204 (455 aa).

The N-terminal stretch at 1-21 (MQKTYLLALLVSSLASVRSLA) is a signal peptide. N93 is a glycosylation site (N-linked (GlcNAc...) asparagine). D170 contacts Zn(2+). Residue E202 is the Proton acceptor of the active site. E203 is a binding site for Zn(2+). An N-linked (GlcNAc...) asparagine glycan is attached at N390.

This sequence belongs to the peptidase M20A family. Zn(2+) is required as a cofactor.

The protein localises to the secreted. This Arthroderma otae (strain ATCC MYA-4605 / CBS 113480) (Microsporum canis) protein is Probable carboxypeptidase MCYG_07204.